The following is a 468-amino-acid chain: ATP synthase subunit beta (468 aa).

148 to 155 (GGAGVGKT) serves as a coordination point for ATP.

It belongs to the ATPase alpha/beta chains family. F-type ATPases have 2 components, CF(1) - the catalytic core - and CF(0) - the membrane proton channel. CF(1) has five subunits: alpha(3), beta(3), gamma(1), delta(1), epsilon(1). CF(0) has three main subunits: a(1), b(2) and c(9-12). The alpha and beta chains form an alternating ring which encloses part of the gamma chain. CF(1) is attached to CF(0) by a central stalk formed by the gamma and epsilon chains, while a peripheral stalk is formed by the delta and b chains.

It is found in the cell membrane. The catalysed reaction is ATP + H2O + 4 H(+)(in) = ADP + phosphate + 5 H(+)(out). In terms of biological role, produces ATP from ADP in the presence of a proton gradient across the membrane. The catalytic sites are hosted primarily by the beta subunits. This is ATP synthase subunit beta from Stenotrophomonas maltophilia (strain K279a).